Consider the following 507-residue polypeptide: GMP synthase [glutamine-hydrolyzing] 1 (507 aa).

The Glutamine amidotransferase type-1 domain occupies 4 to 193 (KIIILDFGSQ…VVDVCGCKQD (190 aa)). Cys-79 serves as the catalytic Nucleophile. Catalysis depends on residues His-167 and Glu-169. Residues 194-382 (WSPASFIEST…LGMPEHLITR (189 aa)) form the GMPS ATP-PPase domain. Residue 221–227 (SGGVDSS) coordinates ATP.

In terms of assembly, homodimer.

The enzyme catalyses XMP + L-glutamine + ATP + H2O = GMP + L-glutamate + AMP + diphosphate + 2 H(+). It participates in purine metabolism; GMP biosynthesis; GMP from XMP (L-Gln route): step 1/1. In terms of biological role, catalyzes the synthesis of GMP from XMP. The chain is GMP synthase [glutamine-hydrolyzing] 1 (guaA1) from Bacteroides thetaiotaomicron (strain ATCC 29148 / DSM 2079 / JCM 5827 / CCUG 10774 / NCTC 10582 / VPI-5482 / E50).